The following is a 124-amino-acid chain: Small ribosomal subunit protein bS6 (124 aa).

Residues 99–124 (PLPAPRVMPGSEAAQQQQAEAAASAD) are disordered. The span at 109–124 (SEAAQQQQAEAAASAD) shows a compositional bias: low complexity.

It belongs to the bacterial ribosomal protein bS6 family.

Functionally, binds together with bS18 to 16S ribosomal RNA. The sequence is that of Small ribosomal subunit protein bS6 from Synechococcus sp. (strain CC9605).